A 348-amino-acid chain; its full sequence is Histidinol-phosphate aminotransferase (348 aa).

At Lys210 the chain carries N6-(pyridoxal phosphate)lysine.

Belongs to the class-II pyridoxal-phosphate-dependent aminotransferase family. Histidinol-phosphate aminotransferase subfamily. Homodimer. Pyridoxal 5'-phosphate serves as cofactor.

The enzyme catalyses L-histidinol phosphate + 2-oxoglutarate = 3-(imidazol-4-yl)-2-oxopropyl phosphate + L-glutamate. The protein operates within amino-acid biosynthesis; L-histidine biosynthesis; L-histidine from 5-phospho-alpha-D-ribose 1-diphosphate: step 7/9. The sequence is that of Histidinol-phosphate aminotransferase from Pseudomonas putida (strain ATCC 700007 / DSM 6899 / JCM 31910 / BCRC 17059 / LMG 24140 / F1).